The sequence spans 290 residues: Small ribosomal subunit biogenesis GTPase RsgA (290 aa).

Residues 62–213 form the CP-type G domain; it reads KNSLVRPPIV…IADTPGFSSL (152 aa). Residues 111–114 and 156–164 each bind GTP; these read SKLD and GQTGVGKST. Positions 237, 242, 244, and 250 each coordinate Zn(2+).

The protein belongs to the TRAFAC class YlqF/YawG GTPase family. RsgA subfamily. Monomer. Associates with 30S ribosomal subunit, binds 16S rRNA. The cofactor is Zn(2+).

Its subcellular location is the cytoplasm. Its function is as follows. One of several proteins that assist in the late maturation steps of the functional core of the 30S ribosomal subunit. Helps release RbfA from mature subunits. May play a role in the assembly of ribosomal proteins into the subunit. Circularly permuted GTPase that catalyzes slow GTP hydrolysis, GTPase activity is stimulated by the 30S ribosomal subunit. This chain is Small ribosomal subunit biogenesis GTPase RsgA, found in Streptococcus agalactiae serotype V (strain ATCC BAA-611 / 2603 V/R).